We begin with the raw amino-acid sequence, 163 residues long: Large ribosomal subunit protein eL24y (163 aa).

Over residues Ile-119–Phe-133 the composition is skewed to basic and acidic residues. Residues Ile-119 to Arg-163 form a disordered region.

This sequence belongs to the eukaryotic ribosomal protein eL24 family. As to quaternary structure, interacts with REIL1 and REIL2. Component of the large ribosomal subunit. In terms of tissue distribution, ubiquitous.

It is found in the cytoplasm. Its subcellular location is the nucleus. The protein resides in the nucleolus. The protein localises to the nucleoplasm. Functionally, might have an extraribosomal function in reinitiation of translation of ETTIN and MONOPTEROS genes that are involved in the auxin-mediated gynoecium patterning. Essential in leaf polarity establishment, probably having a role for translation in leaf dorsoventral patterning to specify leaf adaxial identity. This Arabidopsis thaliana (Mouse-ear cress) protein is Large ribosomal subunit protein eL24y.